The following is a 561-amino-acid chain: Arginine--tRNA ligase (561 aa).

The short motif at 123-133 (PNIAKDMHVGH) is the 'HIGH' region element.

The protein belongs to the class-I aminoacyl-tRNA synthetase family. In terms of assembly, monomer.

The protein resides in the cytoplasm. The enzyme catalyses tRNA(Arg) + L-arginine + ATP = L-arginyl-tRNA(Arg) + AMP + diphosphate. The chain is Arginine--tRNA ligase (argS) from Chlamydia pneumoniae (Chlamydophila pneumoniae).